Consider the following 423-residue polypeptide: Serine hydroxymethyltransferase (423 aa).

(6S)-5,6,7,8-tetrahydrofolate-binding positions include Leu118 and Gly122 to Leu124. Lys227 is modified (N6-(pyridoxal phosphate)lysine). Ser351–Phe353 is a binding site for (6S)-5,6,7,8-tetrahydrofolate.

The protein belongs to the SHMT family. In terms of assembly, homodimer. Pyridoxal 5'-phosphate serves as cofactor.

It is found in the cytoplasm. The enzyme catalyses (6R)-5,10-methylene-5,6,7,8-tetrahydrofolate + glycine + H2O = (6S)-5,6,7,8-tetrahydrofolate + L-serine. It functions in the pathway one-carbon metabolism; tetrahydrofolate interconversion. It participates in amino-acid biosynthesis; glycine biosynthesis; glycine from L-serine: step 1/1. Its function is as follows. Catalyzes the reversible interconversion of serine and glycine with tetrahydrofolate (THF) serving as the one-carbon carrier. This reaction serves as the major source of one-carbon groups required for the biosynthesis of purines, thymidylate, methionine, and other important biomolecules. Also exhibits THF-independent aldolase activity toward beta-hydroxyamino acids, producing glycine and aldehydes, via a retro-aldol mechanism. This is Serine hydroxymethyltransferase from Petrotoga mobilis (strain DSM 10674 / SJ95).